We begin with the raw amino-acid sequence, 339 residues long: Ketol-acid reductoisomerase (NADP(+)) (339 aa).

The region spanning 1–182 (MRVYYDRDAD…GGGRSGIIET (182 aa)) is the KARI N-terminal Rossmann domain. NADP(+) contacts are provided by residues 24 to 27 (YGSQ), Arg-48, Ser-51, Ser-53, and 83 to 86 (DELQ). The active site involves His-108. Gly-134 provides a ligand contact to NADP(+). Positions 183-328 (TFREECETDL…GRLRAMMPWI (146 aa)) constitute a KARI C-terminal knotted domain. The Mg(2+) site is built by Asp-191, Glu-195, Glu-227, and Glu-231. Substrate is bound at residue Ser-252.

It belongs to the ketol-acid reductoisomerase family. The cofactor is Mg(2+).

It catalyses the reaction (2R)-2,3-dihydroxy-3-methylbutanoate + NADP(+) = (2S)-2-acetolactate + NADPH + H(+). It carries out the reaction (2R,3R)-2,3-dihydroxy-3-methylpentanoate + NADP(+) = (S)-2-ethyl-2-hydroxy-3-oxobutanoate + NADPH + H(+). The protein operates within amino-acid biosynthesis; L-isoleucine biosynthesis; L-isoleucine from 2-oxobutanoate: step 2/4. It functions in the pathway amino-acid biosynthesis; L-valine biosynthesis; L-valine from pyruvate: step 2/4. Its function is as follows. Involved in the biosynthesis of branched-chain amino acids (BCAA). Catalyzes an alkyl-migration followed by a ketol-acid reduction of (S)-2-acetolactate (S2AL) to yield (R)-2,3-dihydroxy-isovalerate. In the isomerase reaction, S2AL is rearranged via a Mg-dependent methyl migration to produce 3-hydroxy-3-methyl-2-ketobutyrate (HMKB). In the reductase reaction, this 2-ketoacid undergoes a metal-dependent reduction by NADPH to yield (R)-2,3-dihydroxy-isovalerate. The protein is Ketol-acid reductoisomerase (NADP(+)) of Rhodospirillum rubrum (strain ATCC 11170 / ATH 1.1.1 / DSM 467 / LMG 4362 / NCIMB 8255 / S1).